Reading from the N-terminus, the 136-residue chain is Protein NrdI (136 aa).

Belongs to the NrdI family.

Functionally, probably involved in ribonucleotide reductase function. The chain is Protein NrdI from Enterobacter sp. (strain 638).